Here is a 239-residue protein sequence, read N- to C-terminus: Ribitol-5-phosphate cytidylyltransferase (239 aa).

Residues 7-10 and 80-86 contribute to the CTP site; these read FAGG and GETGQMS.

This sequence belongs to the IspD/TarI cytidylyltransferase family. TarI subfamily.

The enzyme catalyses D-ribitol 5-phosphate + CTP + H(+) = CDP-L-ribitol + diphosphate. The protein operates within cell wall biogenesis; poly(ribitol phosphate) teichoic acid biosynthesis. Functionally, catalyzes the transfer of the cytidylyl group of CTP to D-ribitol 5-phosphate. In Streptococcus agalactiae serotype III (strain NEM316), this protein is Ribitol-5-phosphate cytidylyltransferase.